Reading from the N-terminus, the 505-residue chain is ADP-ribosylarginine hydrolase CG2909 (505 aa).

Positions 198, 336, 338, 340, 341, 342, 377, 432, 439, 440, 450, and 451 each coordinate ADP-D-ribose.

The catalysed reaction is N(omega)-(ADP-D-ribosyl)-L-arginyl-[protein] + H2O = ADP-D-ribose + L-arginyl-[protein]. It carries out the reaction N(omega)-(ADP-D-ribosyl)-L-arginine + H2O = ADP-D-ribose + L-arginine. Functionally, protein ADP-ribosyl hydrolase that specifically removes mono-ADP-ribosyl modifications from protein arginine residues. This is ADP-ribosylarginine hydrolase CG2909 from Drosophila melanogaster (Fruit fly).